The following is a 187-amino-acid chain: MIILGIDEAGRGPLSGPVVAAGVILDQDKIIDGLADSKKLTEKKRQSLYQQIITHAKAYTIVEISPQQIDELNILQATLKAMHQVANNLERQFDKVLVDGNKLPNWDYNSEAIVKGDSKIIEISAASILAKVHRDNICLEHDRLYPQYGFAKHKGYPTKEHLENIKKYGVLDIHRKSYKPVQVLLNE.

The 187-residue stretch at 1-187 folds into the RNase H type-2 domain; that stretch reads MIILGIDEAG…YKPVQVLLNE (187 aa). 3 residues coordinate a divalent metal cation: Asp7, Glu8, and Asp99.

This sequence belongs to the RNase HII family. It depends on Mn(2+) as a cofactor. Mg(2+) is required as a cofactor.

The protein localises to the cytoplasm. The catalysed reaction is Endonucleolytic cleavage to 5'-phosphomonoester.. In terms of biological role, endonuclease that specifically degrades the RNA of RNA-DNA hybrids. This Francisella tularensis subsp. tularensis (strain FSC 198) protein is Ribonuclease HII.